The following is a 320-amino-acid chain: MLLDKLSRPLKVLRISLTDRCNLRCNFCMPPGKEYNFLPKRQLLTPEEIEEYVKIFAKLGVEKVRLTGGEPLLREDLEEIIQRISKVEGIKDIALTTNGVFLKERLKALKEAGLKRITVSVHSLNPEKNQKLVNRSVNLGEVFEVIIRAKELGFKVKVNSVIIKGFNDDEILDLARFFKNLGVTLRFIEYMDVGTVNDWDFSKVVSADEILNLMKKEFTFYPLPKRPEDTSMDFIYEDGNKFGIIASVTKPFCRGCNRIRLSADGKLYTCLFSDKGHDLRNAVDKENFIKEVWKDRKDRYSELRRQMKRERKVEMFKVGG.

The Radical SAM core domain maps to 5–222 (KLSRPLKVLR…LMKKEFTFYP (218 aa)). Position 14 (Arg14) interacts with GTP. 3 residues coordinate [4Fe-4S] cluster: Cys21, Cys25, and Cys28. Arg65 contacts GTP. Gly69 serves as a coordination point for S-adenosyl-L-methionine. Residue Thr96 participates in GTP binding. Ser120 provides a ligand contact to S-adenosyl-L-methionine. Lys157 is a GTP binding site. Residue Met191 participates in S-adenosyl-L-methionine binding. [4Fe-4S] cluster contacts are provided by Cys253 and Cys256. Residue 258–260 (RIR) participates in GTP binding. Cys270 contributes to the [4Fe-4S] cluster binding site.

The protein belongs to the radical SAM superfamily. MoaA family. As to quaternary structure, monomer and homodimer. Requires [4Fe-4S] cluster as cofactor.

The catalysed reaction is GTP + AH2 + S-adenosyl-L-methionine = (8S)-3',8-cyclo-7,8-dihydroguanosine 5'-triphosphate + 5'-deoxyadenosine + L-methionine + A + H(+). It participates in cofactor biosynthesis; molybdopterin biosynthesis. In terms of biological role, catalyzes the cyclization of GTP to (8S)-3',8-cyclo-7,8-dihydroguanosine 5'-triphosphate. The sequence is that of GTP 3',8-cyclase from Aquifex aeolicus (strain VF5).